A 213-amino-acid chain; its full sequence is Endonuclease III (213 aa).

The 20-residue stretch at 101-120 (LEELLKLPGVGRKTANIVLW) folds into the HhH domain. C180, C187, C190, and C196 together coordinate [4Fe-4S] cluster.

It belongs to the Nth/MutY family. [4Fe-4S] cluster is required as a cofactor.

It carries out the reaction 2'-deoxyribonucleotide-(2'-deoxyribose 5'-phosphate)-2'-deoxyribonucleotide-DNA = a 3'-end 2'-deoxyribonucleotide-(2,3-dehydro-2,3-deoxyribose 5'-phosphate)-DNA + a 5'-end 5'-phospho-2'-deoxyribonucleoside-DNA + H(+). Functionally, DNA repair enzyme that has both DNA N-glycosylase activity and AP-lyase activity. The DNA N-glycosylase activity releases various damaged pyrimidines from DNA by cleaving the N-glycosidic bond, leaving an AP (apurinic/apyrimidinic) site. The AP-lyase activity cleaves the phosphodiester bond 3' to the AP site by a beta-elimination, leaving a 3'-terminal unsaturated sugar and a product with a terminal 5'-phosphate. The protein is Endonuclease III of Thermotoga maritima (strain ATCC 43589 / DSM 3109 / JCM 10099 / NBRC 100826 / MSB8).